An 82-amino-acid chain; its full sequence is Costars family protein v1g158749 (82 aa).

The protein belongs to the costars family.

The protein is Costars family protein v1g158749 of Nematostella vectensis (Starlet sea anemone).